The primary structure comprises 86 residues: Large ribosomal subunit protein bL31B (86 aa).

Belongs to the bacterial ribosomal protein bL31 family. Type B subfamily. Part of the 50S ribosomal subunit.

The chain is Large ribosomal subunit protein bL31B from Streptococcus uberis (strain ATCC BAA-854 / 0140J).